Reading from the N-terminus, the 597-residue chain is Aspartate--tRNA(Asp/Asn) ligase (597 aa).

Glutamate 182 lines the L-aspartate pocket. The tract at residues 206-209 (QLFK) is aspartate. Arginine 228 is an L-aspartate binding site. ATP is bound by residues 228-230 (RDE) and glutamine 237. An L-aspartate-binding site is contributed by histidine 456. Residue glutamate 490 coordinates ATP. Arginine 497 is a binding site for L-aspartate. 542–545 (GFDR) contacts ATP.

The protein belongs to the class-II aminoacyl-tRNA synthetase family. Type 1 subfamily. Homodimer.

The protein localises to the cytoplasm. The enzyme catalyses tRNA(Asx) + L-aspartate + ATP = L-aspartyl-tRNA(Asx) + AMP + diphosphate. In terms of biological role, aspartyl-tRNA synthetase with relaxed tRNA specificity since it is able to aspartylate not only its cognate tRNA(Asp) but also tRNA(Asn). Reaction proceeds in two steps: L-aspartate is first activated by ATP to form Asp-AMP and then transferred to the acceptor end of tRNA(Asp/Asn). This is Aspartate--tRNA(Asp/Asn) ligase from Desulfatibacillum aliphaticivorans.